The sequence spans 150 residues: Arginine repressor (150 aa).

It belongs to the ArgR family.

It is found in the cytoplasm. It functions in the pathway amino-acid biosynthesis; L-arginine biosynthesis [regulation]. In terms of biological role, regulates arginine biosynthesis genes. This Desulforudis audaxviator (strain MP104C) protein is Arginine repressor.